The sequence spans 117 residues: MSITKNVKETKAVGKYIRLSPHKVRRVLDQIRGRKYQEALIILEFMPYRVCSHIKQILESAAANAEHNDGLNKNQLFVSKAFADKGPTLKRFQPRAQGRAFPIHKPTCHITLGVSEL.

Belongs to the universal ribosomal protein uL22 family. In terms of assembly, part of the 50S ribosomal subunit.

The protein localises to the plastid. It is found in the chloroplast. In terms of biological role, this protein binds specifically to 23S rRNA. The globular domain of the protein is located near the polypeptide exit tunnel on the outside of the subunit, while an extended beta-hairpin is found that lines the wall of the exit tunnel in the center of the 70S ribosome. The sequence is that of Large ribosomal subunit protein uL22c (rpl22) from Pyropia yezoensis (Susabi-nori).